The sequence spans 599 residues: Serine/threonine-protein kinase haspin homolog (599 aa).

The region spanning 287 to 599 (PESIVKIGEG…FSDMLMDQIS (313 aa)) is the Protein kinase domain. ATP-binding positions include 293–301 (IGEGTYGEA), lysine 310, 407–412 (EHGGKD), 448–453 (DLHWGN), and 486–488 (DFT). Catalysis depends on aspartate 448, which acts as the Proton acceptor.

The protein belongs to the protein kinase superfamily. Ser/Thr protein kinase family. Haspin subfamily. As to expression, expressed in meristems and primordia of root tips, lateral roots, shoot apex, leaves and flowers.

The protein localises to the cytoplasm. It is found in the perinuclear region. Its subcellular location is the nucleus. The protein resides in the chromosome. It localises to the cytoskeleton. The protein localises to the phragmoplast. It catalyses the reaction L-seryl-[protein] + ATP = O-phospho-L-seryl-[protein] + ADP + H(+). The enzyme catalyses L-threonyl-[protein] + ATP = O-phospho-L-threonyl-[protein] + ADP + H(+). Threonine-protein kinase that phosphorylates histone H3 in vitro at 'Thr-3' (H3T3ph) and 'Thr-11' (H3T11ph), but not at 'Ser-10' (H3S10ph) or 'Ser-28' (H3S28ph). Plays a role in mitotic cell division during plant growth. Threonine-protein kinase that phosphorylates histone H3 in vitro at 'Thr-3' (H3T3ph), but not at 'Thr-11' (H3T11ph), 'Ser-10' (H3S10ph) or 'Ser-28' (H3S28ph). Involved in histone H3 phosphorylation in mitotic cells. Contributes to organ and plant development, as well as embryonic patterning. In Arabidopsis thaliana (Mouse-ear cress), this protein is Serine/threonine-protein kinase haspin homolog.